Reading from the N-terminus, the 455-residue chain is Bifunctional protein GlmU (455 aa).

Positions Met1 to Pro232 are pyrophosphorylase. Residues Leu10–Gly13, Lys24, Gln75, and Gly80–Thr81 contribute to the UDP-N-acetyl-alpha-D-glucosamine site. Asp106 lines the Mg(2+) pocket. UDP-N-acetyl-alpha-D-glucosamine is bound by residues Gly141, Glu155, Asn172, and Asn230. A Mg(2+)-binding site is contributed by Asn230. Residues Ala233–Gly253 form a linker region. The N-acetyltransferase stretch occupies residues Gly254–Ala455. Positions 336 and 354 each coordinate UDP-N-acetyl-alpha-D-glucosamine. His366 acts as the Proton acceptor in catalysis. UDP-N-acetyl-alpha-D-glucosamine is bound by residues Tyr369 and Asn380. Residues Ala383, Asn389–Tyr390, Ser408, Ala426, and Arg443 contribute to the acetyl-CoA site.

The protein in the N-terminal section; belongs to the N-acetylglucosamine-1-phosphate uridyltransferase family. In the C-terminal section; belongs to the transferase hexapeptide repeat family. Homotrimer. Requires Mg(2+) as cofactor.

Its subcellular location is the cytoplasm. It carries out the reaction alpha-D-glucosamine 1-phosphate + acetyl-CoA = N-acetyl-alpha-D-glucosamine 1-phosphate + CoA + H(+). It catalyses the reaction N-acetyl-alpha-D-glucosamine 1-phosphate + UTP + H(+) = UDP-N-acetyl-alpha-D-glucosamine + diphosphate. The protein operates within nucleotide-sugar biosynthesis; UDP-N-acetyl-alpha-D-glucosamine biosynthesis; N-acetyl-alpha-D-glucosamine 1-phosphate from alpha-D-glucosamine 6-phosphate (route II): step 2/2. It functions in the pathway nucleotide-sugar biosynthesis; UDP-N-acetyl-alpha-D-glucosamine biosynthesis; UDP-N-acetyl-alpha-D-glucosamine from N-acetyl-alpha-D-glucosamine 1-phosphate: step 1/1. It participates in bacterial outer membrane biogenesis; LPS lipid A biosynthesis. Catalyzes the last two sequential reactions in the de novo biosynthetic pathway for UDP-N-acetylglucosamine (UDP-GlcNAc). The C-terminal domain catalyzes the transfer of acetyl group from acetyl coenzyme A to glucosamine-1-phosphate (GlcN-1-P) to produce N-acetylglucosamine-1-phosphate (GlcNAc-1-P), which is converted into UDP-GlcNAc by the transfer of uridine 5-monophosphate (from uridine 5-triphosphate), a reaction catalyzed by the N-terminal domain. The chain is Bifunctional protein GlmU from Nitratidesulfovibrio vulgaris (strain ATCC 29579 / DSM 644 / CCUG 34227 / NCIMB 8303 / VKM B-1760 / Hildenborough) (Desulfovibrio vulgaris).